Here is a 497-residue protein sequence, read N- to C-terminus: NADH-ubiquinone oxidoreductase chain 4 (497 aa).

Transmembrane regions (helical) follow at residues 3–23 (FLLYYTLFISFMLWLAALLII), 42–62 (LFFSFFQFILIIFFWILSDNI), 94–114 (ISLLFLLLTFFLTPICILISW), 122–142 (NSFIICLIFITFILFNIFCVL), 144–164 (LVFFYIFFESILIPMFILIGV), 178–198 (LFFYTLLGSLLMLLGILVIYS), 220–240 (ILWASFFFAFCVKVPLFPFHI), 250–270 (PTVGSVILAGVLLKLGTYGLL), 276–296 (IFCDATYFFLPLVYTLCLLGI), 313–333 (IAYASVSHMSFVILGLFTSNI), 340–360 (VFLMLSHGIVSSGLFFCIGCV), 374–394 (GLVSTMPIFSLCLFILILSNI), 418–438 (FAALIATFSIILTAVYSIWLY), and 463–483 (VVGFIFCFITILFGLKGSYII).

It belongs to the complex I subunit 4 family.

The protein localises to the mitochondrion membrane. It carries out the reaction a ubiquinone + NADH + 5 H(+)(in) = a ubiquinol + NAD(+) + 4 H(+)(out). Core subunit of the mitochondrial membrane respiratory chain NADH dehydrogenase (Complex I) that is believed to belong to the minimal assembly required for catalysis. Complex I functions in the transfer of electrons from NADH to the respiratory chain. The immediate electron acceptor for the enzyme is believed to be ubiquinone. This is NADH-ubiquinone oxidoreductase chain 4 (ND4) from Acanthamoeba castellanii (Amoeba).